The primary structure comprises 413 residues: Precorrin-6Y C(5,15)-methyltransferase [decarboxylating] (413 aa).

This sequence belongs to the precorrin methyltransferase family.

The catalysed reaction is precorrin-6B + 2 S-adenosyl-L-methionine = precorrin-8X + 2 S-adenosyl-L-homocysteine + CO2 + 3 H(+). It functions in the pathway cofactor biosynthesis; adenosylcobalamin biosynthesis; cob(II)yrinate a,c-diamide from precorrin-2 (aerobic route): step 7/10. Its function is as follows. Catalyzes the methylation of both C-5 and C-15 in precorrin-6Y to form precorrin-8X. In Sinorhizobium sp, this protein is Precorrin-6Y C(5,15)-methyltransferase [decarboxylating] (cobL).